Here is a 303-residue protein sequence, read N- to C-terminus: tRNA pseudouridine synthase B (303 aa).

Catalysis depends on Asp-38, which acts as the Nucleophile.

It belongs to the pseudouridine synthase TruB family. Type 1 subfamily.

It catalyses the reaction uridine(55) in tRNA = pseudouridine(55) in tRNA. Its function is as follows. Responsible for synthesis of pseudouridine from uracil-55 in the psi GC loop of transfer RNAs. This Oceanobacillus iheyensis (strain DSM 14371 / CIP 107618 / JCM 11309 / KCTC 3954 / HTE831) protein is tRNA pseudouridine synthase B.